Reading from the N-terminus, the 270-residue chain is Bis(5'-nucleosyl)-tetraphosphatase, symmetrical (270 aa).

Belongs to the Ap4A hydrolase family.

It catalyses the reaction P(1),P(4)-bis(5'-adenosyl) tetraphosphate + H2O = 2 ADP + 2 H(+). Hydrolyzes diadenosine 5',5'''-P1,P4-tetraphosphate to yield ADP. This chain is Bis(5'-nucleosyl)-tetraphosphatase, symmetrical, found in Actinobacillus pleuropneumoniae serotype 3 (strain JL03).